The chain runs to 103 residues: Putative ribosomal RNA-processing protein 7 homolog B (103 aa).

Basic and acidic residues predominate over residues 1–19 (MEAYDQKIAEEEAKAKEEE). The tract at residues 1 to 25 (MEAYDQKIAEEEAKAKEEEGVPDEE) is disordered. Positions 71–100 (ESKMEHLAQLRKKFEEDKQRIELLRAQRKF) form a coiled coil.

The protein belongs to the RRP7 family.

In Homo sapiens (Human), this protein is Putative ribosomal RNA-processing protein 7 homolog B.